The following is a 141-amino-acid chain: Subtilase cytotoxin subunit B (141 aa).

The N-terminal stretch at 1–23 is a signal peptide; that stretch reads MTIKRFFVCAGIMGCLSLNPAMA. N-glycoloyl-alpha-neuraminate is bound by residues 33-35 and Gln-59; that span reads MFS. A hydrophobic patch important for binding to SubA region spans residues 89–94; that stretch reads YFYTTG. Position 101 (Tyr-101) interacts with N-glycoloyl-alpha-neuraminate.

Forms a complex with SubA with the stoichiometry SubA1:SubB5 (called SubAB5). Each SubB subunit makes different contacts with the single SubA subunit. This subunit alone forms pentamers.

Its subcellular location is the secreted. The protein localises to the host cytoplasm. It is found in the host cytosol. The protein resides in the host endoplasmic reticulum lumen. Receptor-binding subunit of subtilase cytotoxin SubAB5. Required for receptor-binding and thus correct trafficking in the host cell. Has specificity for host glycans terminating in the sialic acid N-glycolyl-alpha-neuraminic acid (Neu5Gc); each subunit in the SubB pentamer binds one Neu5Gc. The protease subunit (SubA) cleaves host BiP/HSPA5, inducing the host endoplasmic reticulum stress response and eventual cell death. Culture supernatant of E.coli expressing both subA and subB are toxic for Vero cells (African green monkey kidney cell line), Chinese hamster ovary cells and Hct-8 cells (human colonic epithelial cell line); the subunits are not toxic individually. Purified SubAB5 is highly toxic, &lt;0.1 pg is able to kill at least 50% of 30'000 Vero cells in a microtiter plate assay after 3 days; no cytotoxicity is seen at 24 hours. Preabsorption with cells expressing a ganglioside GM2 mimic reduced cytotoxicity of SubAB5 by 93% in the Vero cytotoxicity assay. Intraperitoneal injection of 200 ng of purified SubAB5 kills mice; the higher the dose the faster the mice die. Animals injected with purified SubAB5 have microvascular thrombi in the brain and other organs, including the renal tubules and glomeruli. Mice fed E.coli cells expressing cloned SubAB5 experience drastic weight loss and appear ill and lethargic. SubB alone at 2.5 ug/ml causes vacuolation of Vero cells, which requires the V-type ATPase proton pump; treated cells die. Protein synthesis in Vero cells is transiently inhibited by SubAB5; both subunits are required for this effect. Inhibition of protein synthesis is prevented by brefeldin A; cells are arrested in the G1 phase. SubAB5 at 100 ng/ml induced caspase-dependent apoptosis in Vero cells through mitochondrial membrane damage. The chain is Subtilase cytotoxin subunit B from Escherichia coli.